Consider the following 193-residue polypeptide: Ion-translocating oxidoreductase complex subunit A (193 aa).

6 helical membrane passes run 4-24, 39-59, 71-91, 102-122, 134-154, and 171-191; these read FLLVLLSTALVNNVVLVKFLG, IGMGLATTFVITVASAACWLV, FLRILSMILVIAAIVQFIETV, ALGIYLPLITTNCAVLGLPLM, TLSGFGASVGFTLVLVIFAGM, and PIAFVSAGLLGLAFMGFAGLV.

This sequence belongs to the NqrDE/RnfAE family. The complex is composed of six subunits: RnfA, RnfB, RnfC, RnfD, RnfE and RnfG.

It localises to the cellular chromatophore membrane. In terms of biological role, part of a membrane-bound complex that couples electron transfer with translocation of ions across the membrane. Required for nitrogen fixation. Involved in electron transfer to nitrogenase. The protein is Ion-translocating oxidoreductase complex subunit A of Rhodobacter capsulatus (Rhodopseudomonas capsulata).